A 452-amino-acid polypeptide reads, in one-letter code: Glucose-6-phosphate isomerase (452 aa).

E290 serves as the catalytic Proton donor. Active-site residues include H311 and K425.

This sequence belongs to the GPI family.

The protein localises to the cytoplasm. It catalyses the reaction alpha-D-glucose 6-phosphate = beta-D-fructose 6-phosphate. Its pathway is carbohydrate biosynthesis; gluconeogenesis. It participates in carbohydrate degradation; glycolysis; D-glyceraldehyde 3-phosphate and glycerone phosphate from D-glucose: step 2/4. Its function is as follows. Catalyzes the reversible isomerization of glucose-6-phosphate to fructose-6-phosphate. The polypeptide is Glucose-6-phosphate isomerase (Limosilactobacillus reuteri (strain DSM 20016) (Lactobacillus reuteri)).